The primary structure comprises 461 residues: Na(+)/H(+) antiporter NhaA (461 aa).

The disordered stretch occupies residues 1–23 (MILSTQRLGRFMSPAPTPAPDAK). 12 helical membrane passes run 48-68 (VGGALLVAAAVIALIWANSPV), 89-109 (LSLGAWAADGLLAIFFFLVGL), 127-147 (IVPVAAAAGGVLVPALIYAAV), 157-177 (GWAIPTATDIAFAVAVLAIIG), 186-206 (IFLLTLAVVDDLIAISIIAFF), 211-231 (IQAAPLLLALIPLALYAFLAQ), 236-256 (FFGAHFMAAWAILLPLGIVTW), 257-277 (ALVHASGIHATVAGVLLGFAV), 305-325 (ISAGVAVPIFAFFSAGVAVGG), 339-359 (IGIIMALVLGKPIGIMGTTWI), 374-394 (WIDVFGVSLLAGIGFTVSLLV), and 408-428 (HAKVGILAASLLAAILATVVL).

The protein belongs to the NhaA Na(+)/H(+) (TC 2.A.33) antiporter family.

The protein resides in the cell membrane. It catalyses the reaction Na(+)(in) + 2 H(+)(out) = Na(+)(out) + 2 H(+)(in). Its function is as follows. Na(+)/H(+) antiporter that extrudes sodium in exchange for external protons. This Arthrobacter sp. (strain FB24) protein is Na(+)/H(+) antiporter NhaA.